The chain runs to 243 residues: Adenosylcobinamide-GDP ribazoletransferase (243 aa).

The next 5 membrane-spanning stretches (helical) occupy residues 31–51 (LLFYPLVGLLFGVILWALNIA), 57–77 (LLLHAALLLAVWVLLSGALHL), 109–129 (IAVVTLVLVLLLKFAALLALI), 135–155 (MALIIVPLIGRAALLGLFLTT), and 188–208 (LVIAGFNAVVALLLAVIVFIW).

The protein belongs to the CobS family. It depends on Mg(2+) as a cofactor.

It is found in the cell inner membrane. It carries out the reaction alpha-ribazole + adenosylcob(III)inamide-GDP = adenosylcob(III)alamin + GMP + H(+). The enzyme catalyses alpha-ribazole 5'-phosphate + adenosylcob(III)inamide-GDP = adenosylcob(III)alamin 5'-phosphate + GMP + H(+). The protein operates within cofactor biosynthesis; adenosylcobalamin biosynthesis; adenosylcobalamin from cob(II)yrinate a,c-diamide: step 7/7. Functionally, joins adenosylcobinamide-GDP and alpha-ribazole to generate adenosylcobalamin (Ado-cobalamin). Also synthesizes adenosylcobalamin 5'-phosphate from adenosylcobinamide-GDP and alpha-ribazole 5'-phosphate. The chain is Adenosylcobinamide-GDP ribazoletransferase from Pseudomonas fluorescens (strain Pf0-1).